An 813-amino-acid chain; its full sequence is Phenylalanine--tRNA ligase beta subunit (813 aa).

The tRNA-binding domain maps to 42 to 151 (AKDFNHVVIG…ADAPVGKAYA (110 aa)). Positions 405–480 (VKKAPVDITI…RLNGYEHIPE (76 aa)) constitute a B5 domain. Mg(2+) contacts are provided by D458, D464, E467, and E468. Residues 720-813 (SKFPIVERDF…LKKNFDLSVR (94 aa)) form the FDX-ACB domain.

It belongs to the phenylalanyl-tRNA synthetase beta subunit family. Type 1 subfamily. As to quaternary structure, tetramer of two alpha and two beta subunits. Mg(2+) is required as a cofactor.

It is found in the cytoplasm. It catalyses the reaction tRNA(Phe) + L-phenylalanine + ATP = L-phenylalanyl-tRNA(Phe) + AMP + diphosphate + H(+). The chain is Phenylalanine--tRNA ligase beta subunit from Bdellovibrio bacteriovorus (strain ATCC 15356 / DSM 50701 / NCIMB 9529 / HD100).